The sequence spans 145 residues: Immunity protein CdiI (145 aa).

As to quaternary structure, interacts with cognate toxin fragment CdiA-CT.

Its function is as follows. Immunity protein component of a toxin-immunity protein module, which functions as a cellular contact-dependent growth inhibition (CDI) system. CDI modules allow bacteria to communicate with and inhibit the growth of closely related neighboring bacteria in a contact-dependent fashion. Protects cells against the 16S rRNase activity of CdiA-CT, its cognate toxin protein, but not against the toxic effects of a similar rRNase, non-cognate CdiA-CT from E.chrysanthemi strain EC16. The chain is Immunity protein CdiI from Enterobacter cloacae subsp. cloacae (strain ATCC 13047 / DSM 30054 / NBRC 13535 / NCTC 10005 / WDCM 00083 / NCDC 279-56).